Reading from the N-terminus, the 216-residue chain is Kynurenine formamidase (216 aa).

Phe-21 provides a ligand contact to substrate. Zn(2+)-binding residues include His-51, His-55, and Asp-57. The active-site Proton donor/acceptor is His-61. 2 residues coordinate Zn(2+): His-167 and Glu-179.

Belongs to the Cyclase 1 superfamily. KynB family. In terms of assembly, homodimer. Requires Zn(2+) as cofactor.

It catalyses the reaction N-formyl-L-kynurenine + H2O = L-kynurenine + formate + H(+). It participates in amino-acid degradation; L-tryptophan degradation via kynurenine pathway; L-kynurenine from L-tryptophan: step 2/2. Functionally, catalyzes the hydrolysis of N-formyl-L-kynurenine to L-kynurenine, the second step in the kynurenine pathway of tryptophan degradation. This chain is Kynurenine formamidase, found in Paracidovorax citrulli (strain AAC00-1) (Acidovorax citrulli).